Reading from the N-terminus, the 819-residue chain is Metabotropic glutamate receptor-like protein O (819 aa).

The first 19 residues, 1–19 (MKKVFFLILILNCVVGALS), serve as a signal peptide directing secretion. Topologically, residues 20-394 (NKNICKISLL…FVDSYSNSIK (375 aa)) are extracellular. 6 N-linked (GlcNAc...) asparagine glycosylation sites follow: N99, N185, N277, N295, N330, and N370. Residues 395–415 (ISILSVSIFCIFICVLGMIFI) traverse the membrane as a helical segment. The Cytoplasmic portion of the chain corresponds to 416–428 (TVLRNARILKSSS). The helical transmembrane segment at 429 to 449 (PSFLLLILFGCIVIFTGCILF) threads the bilayer. The Extracellular segment spans residues 450 to 457 (SQPATDKT). The helical transmembrane segment at 458 to 478 (CQGRVWLLSIGYTIFLGSLLI) threads the bilayer. Topologically, residues 479-503 (KNWRVWLLFDNKKLRKRSITNWKLY) are cytoplasmic. The chain crosses the membrane as a helical span at residues 504–524 (PWVAGILVVDVLILALWQGLG). Residues 525–550 (DIKSESRIIGTSFYQYTNVCTNNDQG) lie on the Extracellular side of the membrane. A helical transmembrane segment spans residues 551-571 (SIALYILLAFHGLKLLGTCFI). Residues 572 to 587 (SFKIKLVDIEEFNESK) are Cytoplasmic-facing. Residues 588-608 (PITTSVFIILFCIFTIILLIA) form a helical membrane-spanning segment. Over 609–624 (PSSSSSSASSPQPIAS) the chain is Extracellular. A helical transmembrane segment spans residues 625-645 (LETIICICSVTTTAISIGLLF). At 646-819 (GDKIYFITTQ…NNENEIISDT (174 aa)) the chain is on the cytoplasmic side. Positions 674–819 (KDCDDDDDDS…NNENEIISDT (146 aa)) are disordered. A compositionally biased stretch (basic residues) spans 695–712 (NKNKNKNRNQSEKKKRPN). The segment covering 726-739 (ESVVFNPPSNNDLT) has biased composition (polar residues). A compositionally biased stretch (basic and acidic residues) spans 748-768 (GIKEGHGHDSENNDEYEHHED). Residues 769–798 (EDHEYEGEGEDEDHEDEYEVENDIEQEQEQ) show a composition bias toward acidic residues. Residues 799–808 (ESSNISISTK) show a composition bias toward low complexity.

The protein in the N-terminal section; belongs to the BMP lipoprotein family. In the C-terminal section; belongs to the G-protein coupled receptor 3 family. GABA-B receptor subfamily.

Its subcellular location is the membrane. In Dictyostelium discoideum (Social amoeba), this protein is Metabotropic glutamate receptor-like protein O (grlO).